Reading from the N-terminus, the 679-residue chain is MSQYTDIDRLAVSTIRLLAVDQVSAANSGHPGAPLGLAPAAHVIWKQMRLNPKNPEWINRDRFVLSNGHACALLYSLLHLFGYDMSIEDLKHFRHLGSKTPGHPEFELPGVEVTTGPLGQGISNAVGMAIAQANFAATYNKPDYELSDSYTYVFLGDGCLQEGVSSEASSLAGHLRLKNLIAFYDDNQITIDGNINVSFDEDVSKRYEAYGWEVLHVENGNDDLDAISKALEQAKLSDRPTLIKLTTTIGFGSLNAGSHSVHGAPLKADDVKQLKVKFGFNPEESFVVPQEVYDLYNKSTIEPGIEANKQWDALLDAYVGQFPELGAEVKRRLAGEFPEGWESKLPTYTPEDSAVASRKLSEIVLDNVFDTLPELLGGSADLTPSNLTRSKGAVDFQPPITGLGDYSGRYIRYGVREHGMGAIMNGISAFGANYRPYGGTFLNFVSYASGAVRLSALSGHPVIWVATHDSIGLGEDGPTHQPIETLAHFRAIPNLQVWRPADGNEVTAAYKVALTNKHTPAIIALSRQNLPQLQGSSVEKAVKGGYILQDVDQPDLAIVSTGSEVGIAVEAAKVLAEKNIKARIVSLPDFHSFGQQSKEYQLSVFPDGVPILSVEVLATSGWSKYAHQSFGLDRFGASGKGPAVYEKFEFTPQGIATRAEKTVEFYKGKQVISPLNTAF.

His-30 contributes to the substrate binding site. Thiamine diphosphate-binding positions include His-69 and 116 to 118 (GPL). Residue Asp-157 coordinates Mg(2+). The thiamine diphosphate site is built by Gly-158 and Asn-187. Mg(2+)-binding residues include Asn-187 and Ile-189. Substrate is bound by residues His-262, Arg-358, and Ser-385. His-262 is a thiamine diphosphate binding site. Thiamine diphosphate-binding residues include Glu-417 and Phe-444. Catalysis depends on Glu-417, which acts as the Proton donor. The substrate site is built by His-468, Asp-476, and Arg-527.

The protein belongs to the transketolase family. Homodimer. Mg(2+) serves as cofactor. It depends on Ca(2+) as a cofactor. Mn(2+) is required as a cofactor. Requires Co(2+) as cofactor. The cofactor is thiamine diphosphate.

It catalyses the reaction D-sedoheptulose 7-phosphate + D-glyceraldehyde 3-phosphate = aldehydo-D-ribose 5-phosphate + D-xylulose 5-phosphate. Functionally, catalyzes the transfer of a two-carbon ketol group from a ketose donor to an aldose acceptor, via a covalent intermediate with the cofactor thiamine pyrophosphate. This is Transketolase (TKL1) from Kluyveromyces lactis (strain ATCC 8585 / CBS 2359 / DSM 70799 / NBRC 1267 / NRRL Y-1140 / WM37) (Yeast).